Reading from the N-terminus, the 799-residue chain is Pentatricopeptide repeat-containing protein At2g26790, mitochondrial (799 aa).

Residues 1-27 (MRFSPTFFLLSQLRLTRRRAATSSRFY) constitute a mitochondrion transit peptide. 18 PPR repeats span residues 145–179 (LIRVSGALVKAYVSLGMFDEATDVLFQSKRLDCVV), 180–214 (DIKACNFLMNRMTEFGKIGMLMTLFKQLKQLGLCA), 215–250 (NEYTYAIVVKALCRKGNLEEAAMLLIENESVFGYKT), 251–278 (FINGLCVTGETEKAVALILELIDRKYLA), 282–316 (LRAVLGMVVRGFCNEMKMKAAESVIIEMEEIGFGL), 317–351 (DVYACLAVIDRYCKNMNLPEALGFLDKMLGKGLKV), 352–386 (NCVIVSLILQCYCKMDMCLEALEKFKEFRDMNIFL), 387–421 (DRVCYNVAFDALSKLGRVEEAFELLQEMKDRGIVP), 422–456 (DVINYTTLIDGYCLQGKVVDALDLIDEMIGNGMSP), 457–491 (DLITYNVLVSGLARNGHEEEVLEIYERMKAEGPKP), 492–522 (NAVTNSVIIEGLCFARKVKEAEDFFSSLEQK), 523–553 (CPENKASFVKGYCEAGLSKKAYKAFVRLEYP), 555–589 (RKSVYIKLFFSLCIEGYLEKAHDVLKKMSAYRVEP), 590–624 (GRSMCGKMIGAFCKLNNVREAQVLFDTMVERGLIP), 625–659 (DLFTYTIMIHTYCRLNELQKAESLFEDMKQRGIKP), 660–695 (DVVTYTVLLDRYLKLDPEHHETCSVQGEVGKRKASE), 708–742 (DVVCYTVLIDRQCKMNNLEQAAELFDRMIDSGLEP), and 743–777 (DMVAYTTLISSYFRKGYIDMAVTLVTELSKKYNIP).

The protein belongs to the PPR family. P subfamily.

The protein resides in the mitochondrion. The polypeptide is Pentatricopeptide repeat-containing protein At2g26790, mitochondrial (Arabidopsis thaliana (Mouse-ear cress)).